The primary structure comprises 369 residues: S-adenosylmethionine:tRNA ribosyltransferase-isomerase (369 aa).

It belongs to the QueA family. As to quaternary structure, monomer.

Its subcellular location is the cytoplasm. It carries out the reaction 7-aminomethyl-7-carbaguanosine(34) in tRNA + S-adenosyl-L-methionine = epoxyqueuosine(34) in tRNA + adenine + L-methionine + 2 H(+). Its pathway is tRNA modification; tRNA-queuosine biosynthesis. In terms of biological role, transfers and isomerizes the ribose moiety from AdoMet to the 7-aminomethyl group of 7-deazaguanine (preQ1-tRNA) to give epoxyqueuosine (oQ-tRNA). The chain is S-adenosylmethionine:tRNA ribosyltransferase-isomerase from Acaryochloris marina (strain MBIC 11017).